Here is a 291-residue protein sequence, read N- to C-terminus: 33 kDa chaperonin (291 aa).

Disulfide bonds link Cys235-Cys237 and Cys268-Cys271.

Belongs to the HSP33 family. Under oxidizing conditions two disulfide bonds are formed involving the reactive cysteines. Under reducing conditions zinc is bound to the reactive cysteines and the protein is inactive.

It localises to the cytoplasm. In terms of biological role, redox regulated molecular chaperone. Protects both thermally unfolding and oxidatively damaged proteins from irreversible aggregation. Plays an important role in the bacterial defense system toward oxidative stress. In Streptococcus agalactiae serotype Ia (strain ATCC 27591 / A909 / CDC SS700), this protein is 33 kDa chaperonin.